Here is an 81-residue protein sequence, read N- to C-terminus: YcgL domain-containing protein Tgr7_3126 (81 aa).

One can recognise a YcgL domain in the interval 1-81 (MQVYVYKSRR…QMPPQNERPL (81 aa)).

This chain is YcgL domain-containing protein Tgr7_3126, found in Thioalkalivibrio sulfidiphilus (strain HL-EbGR7).